Here is a 28-residue protein sequence, read N- to C-terminus: U15-ctenitoxin-Co1a (28 aa).

2 disulfides stabilise this stretch: cysteine 3/cysteine 17 and cysteine 10/cysteine 22.

In terms of tissue distribution, expressed by the venom gland.

It localises to the secreted. Insecticidal neurotoxin that reversibly inhibits the N-methyl-D-aspartate (NMDA)-subtype of ionotropic glutamate receptor (GRIN) and inhibits inactivation of insect sodium channels (Nav). In vivo, is highly toxic to insects. This chain is U15-ctenitoxin-Co1a, found in Ctenus ornatus (Brazilian spider).